The chain runs to 196 residues: FMN-dependent NADH:quinone oxidoreductase (196 aa).

FMN is bound at residue S10.

It belongs to the azoreductase type 1 family. In terms of assembly, homodimer. It depends on FMN as a cofactor.

The catalysed reaction is 2 a quinone + NADH + H(+) = 2 a 1,4-benzosemiquinone + NAD(+). The enzyme catalyses N,N-dimethyl-1,4-phenylenediamine + anthranilate + 2 NAD(+) = 2-(4-dimethylaminophenyl)diazenylbenzoate + 2 NADH + 2 H(+). Functionally, quinone reductase that provides resistance to thiol-specific stress caused by electrophilic quinones. In terms of biological role, also exhibits azoreductase activity. Catalyzes the reductive cleavage of the azo bond in aromatic azo compounds to the corresponding amines. This chain is FMN-dependent NADH:quinone oxidoreductase, found in Cereibacter sphaeroides (strain ATCC 17023 / DSM 158 / JCM 6121 / CCUG 31486 / LMG 2827 / NBRC 12203 / NCIMB 8253 / ATH 2.4.1.) (Rhodobacter sphaeroides).